The primary structure comprises 936 residues: Lipoxygenase 2.1, chloroplastic (936 aa).

The interval 1 to 69 is disordered; the sequence is MLTATKPLVG…LSADSNGAAV (69 aa). The span at 47–59 shows a compositional bias: low complexity; the sequence is STSTSTTTTTTTT. Positions 88–217 constitute a PLAT domain; it reads MKATVTVHMS…CTPDKRVFFP (130 aa). One can recognise a Lipoxygenase domain in the interval 220–936; that stretch reads SYLPSQTPKG…EMGIPNSISI (717 aa). A disordered region spans residues 264 to 308; the sequence is LGNPDDDNNPTTRPVLGGKEHPYPRRCRTGRPRSKKDPFSEERSH. Basic residues predominate over residues 287–297; the sequence is PRRCRTGRPRS. The span at 298–308 shows a compositional bias: basic and acidic residues; that stretch reads KKDPFSEERSH. 5 residues coordinate Fe cation: histidine 587, histidine 592, histidine 777, asparagine 781, and isoleucine 936.

The protein belongs to the lipoxygenase family. Fe cation is required as a cofactor. The N-terminus is blocked.

The protein localises to the plastid. Its subcellular location is the chloroplast. The enzyme catalyses (9Z,12Z)-octadecadienoate + O2 = (13S)-hydroperoxy-(9Z,11E)-octadecadienoate. The catalysed reaction is (9Z,12Z,15Z)-octadecatrienoate + O2 = (13S)-hydroperoxy-(9Z,11E,15Z)-octadecatrienoate. It functions in the pathway lipid metabolism; oxylipin biosynthesis. In terms of biological role, plant lipoxygenase may be involved in a number of diverse aspects of plant physiology including growth and development, pest resistance, and senescence or responses to wounding. This enzyme is possibly involved in jasmonic acid synthesis. It exhibits linoleate 13-lipoxygenase and arachidonate 15-lipoxygenase activity. The protein is Lipoxygenase 2.1, chloroplastic (LOX2.1) of Hordeum vulgare (Barley).